Consider the following 208-residue polypeptide: Cysteine-rich protein 2 (208 aa).

An LIM zinc-binding 1 domain is found at 5 to 57 (CPKCDKTVYFAEKVSSLGKDWHKFCLKCERCNKTLTPGGHAEHDGKPFCHKPC). The residue at position 23 (lysine 23) is an N6-acetyllysine. The residue at position 104 (serine 104) is a Phosphoserine. The region spanning 126–178 (CPRCNKRVYFAEKVTSLGKDWHRPCLRCERCSKTLTPGGHAEHDGQPYCHKPC) is the LIM zinc-binding 2 domain. Lysine 138 and lysine 144 each carry N6-acetyllysine.

As to quaternary structure, interacts with TGFB1I1. In terms of tissue distribution, expressed more abundantly in liver and kidney of females than that of males. Equally expressed in brain, lung and heart.

This is Cysteine-rich protein 2 (Crip2) from Rattus norvegicus (Rat).